The chain runs to 474 residues: ATP synthase subunit beta (474 aa).

151–158 (GGAGVGKT) is a binding site for ATP.

It belongs to the ATPase alpha/beta chains family. As to quaternary structure, F-type ATPases have 2 components, CF(1) - the catalytic core - and CF(0) - the membrane proton channel. CF(1) has five subunits: alpha(3), beta(3), gamma(1), delta(1), epsilon(1). CF(0) has three main subunits: a(1), b(2) and c(9-12). The alpha and beta chains form an alternating ring which encloses part of the gamma chain. CF(1) is attached to CF(0) by a central stalk formed by the gamma and epsilon chains, while a peripheral stalk is formed by the delta and b chains.

The protein localises to the cell inner membrane. The catalysed reaction is ATP + H2O + 4 H(+)(in) = ADP + phosphate + 5 H(+)(out). Functionally, produces ATP from ADP in the presence of a proton gradient across the membrane. The catalytic sites are hosted primarily by the beta subunits. This Ruegeria sp. (strain TM1040) (Silicibacter sp.) protein is ATP synthase subunit beta.